A 572-amino-acid polypeptide reads, in one-letter code: FAD-linked oxidoreductase patO (572 aa).

The N-terminal stretch at methionine 1 to glycine 23 is a signal peptide. N-linked (GlcNAc...) asparagine glycosylation is found at asparagine 48, asparagine 71, asparagine 126, asparagine 180, asparagine 309, asparagine 354, asparagine 381, asparagine 422, asparagine 446, and asparagine 481. The 181-residue stretch at cysteine 115–aspartate 295 folds into the FAD-binding PCMH-type domain.

It belongs to the oxygen-dependent FAD-linked oxidoreductase family. The cofactor is FAD.

The protein localises to the vacuole lumen. It participates in mycotoxin biosynthesis; patulin biosynthesis. FAD-linked oxidoreductase; part of the gene cluster that mediates the biosynthesis of patulin, an acetate-derived tetraketide mycotoxin produced by several fungal species that shows antimicrobial properties against several bacteria. PatO acts with patJ in the vacuole to convert gentisyl alcohol to isoepoxydon. The pathway begins with the synthesis of 6-methylsalicylic acid by the polyketide synthase (PKS) patK via condensation of acetate and malonate units. The 6-methylsalicylic acid decarboxylase patG then catalyzes the decarboxylation of 6-methylsalicylic acid to yield m-cresol (also known as 3-methylphenol). These first reactions occur in the cytosol. The intermediate m-cresol is then transported into the endoplasmic reticulum where the cytochrome P450 monooxygenase patH converts it to m-hydroxybenzyl alcohol, which is further converted to gentisyl alcohol by the cytochrome P450 monooxygenase patI. The oxidoreductases patJ and patO further convert gentisyl alcohol to isoepoxydon in the vacuole. PatN catalyzes then the transformation of isoepoxydon into phyllostine. The cluster protein patF is responsible for the conversion from phyllostine to neopatulin whereas the alcohol dehydrogenase patD converts neopatulin to E-ascladiol. The steps between isoepoxydon and E-ascladiol occur in the cytosol, and E-ascladiol is probably secreted to the extracellular space by one of the cluster-specific transporters patC or patM. Finally, the secreted patulin synthase patE catalyzes the conversion of E-ascladiol to patulin. This is FAD-linked oxidoreductase patO from Aspergillus clavatus (strain ATCC 1007 / CBS 513.65 / DSM 816 / NCTC 3887 / NRRL 1 / QM 1276 / 107).